The following is a 391-amino-acid chain: Phosphoglycerate kinase (391 aa).

Substrate-binding positions include 21–23 (DFN), Arg-36, 59–62 (HLGR), Arg-113, and Arg-146. ATP contacts are provided by residues Lys-197, Glu-319, and 345–348 (GGDT).

It belongs to the phosphoglycerate kinase family. As to quaternary structure, monomer.

It is found in the cytoplasm. It catalyses the reaction (2R)-3-phosphoglycerate + ATP = (2R)-3-phospho-glyceroyl phosphate + ADP. It participates in carbohydrate degradation; glycolysis; pyruvate from D-glyceraldehyde 3-phosphate: step 2/5. This chain is Phosphoglycerate kinase, found in Methylococcus capsulatus (strain ATCC 33009 / NCIMB 11132 / Bath).